Reading from the N-terminus, the 128-residue chain is Large ribosomal subunit protein bL19 (128 aa).

The protein belongs to the bacterial ribosomal protein bL19 family.

Functionally, this protein is located at the 30S-50S ribosomal subunit interface and may play a role in the structure and function of the aminoacyl-tRNA binding site. In Verminephrobacter eiseniae (strain EF01-2), this protein is Large ribosomal subunit protein bL19.